The primary structure comprises 840 residues: Heat shock 70 kDa protein 4 (840 aa).

An N6-acetyllysine modification is found at Lys53. Ser76 is subject to Phosphoserine. 2 positions are modified to phosphotyrosine: Tyr89 and Tyr336. Phosphoserine occurs at positions 393 and 415. At Lys430 the chain carries N6-acetyllysine. The interval 500 to 575 (VHKSEESEEP…QAKKAKVKTS (76 aa)) is disordered. Positions 514-533 (QNAKEEEKMQVDQEEPHTEE) are enriched in basic and acidic residues. Thr538 carries the phosphothreonine modification. A Phosphoserine modification is found at Ser546. Tyr660 carries the post-translational modification Phosphotyrosine. At Ser756 the chain carries Phosphoserine. Lys773 bears the N6-methyllysine mark. Residues 781–840 (PIISKPKPKVEPPKEEPKHAEQNGPVDGQGDNPGTQAAEHGADTAVPSDGDKKLPEMDID) are disordered. Basic and acidic residues-rich tracts occupy residues 788–801 (PKVE…KHAE) and 829–840 (DGDKKLPEMDID).

This sequence belongs to the heat shock protein 70 family. As to quaternary structure, interacts with TJP1/ZO-1. As to expression, ubiquitous. Highly expressed in testis.

Its subcellular location is the cytoplasm. The sequence is that of Heat shock 70 kDa protein 4 (Hspa4) from Rattus norvegicus (Rat).